The following is a 464-amino-acid chain: Fumarate hydratase class II (464 aa).

Substrate is bound by residues 98-100 (SGT), 129-132 (HPND), 139-141 (SSN), and Thr-187. His-188 functions as the Proton donor/acceptor in the catalytic mechanism. Residue Ser-318 is part of the active site. Substrate contacts are provided by residues Ser-319 and 324–326 (KVN).

This sequence belongs to the class-II fumarase/aspartase family. Fumarase subfamily. As to quaternary structure, homotetramer.

It is found in the cytoplasm. The catalysed reaction is (S)-malate = fumarate + H2O. It functions in the pathway carbohydrate metabolism; tricarboxylic acid cycle; (S)-malate from fumarate: step 1/1. In terms of biological role, involved in the TCA cycle. Catalyzes the stereospecific interconversion of fumarate to L-malate. This chain is Fumarate hydratase class II, found in Haemophilus ducreyi (strain 35000HP / ATCC 700724).